Reading from the N-terminus, the 72-residue chain is Translation initiation factor IF-1 (72 aa).

Residues 1–72 (MTKEEVLEFP…TKGRITYRFK (72 aa)) enclose the S1-like domain.

The protein belongs to the IF-1 family. As to quaternary structure, component of the 30S ribosomal translation pre-initiation complex which assembles on the 30S ribosome in the order IF-2 and IF-3, IF-1 and N-formylmethionyl-tRNA(fMet); mRNA recruitment can occur at any time during PIC assembly.

The protein localises to the cytoplasm. One of the essential components for the initiation of protein synthesis. Stabilizes the binding of IF-2 and IF-3 on the 30S subunit to which N-formylmethionyl-tRNA(fMet) subsequently binds. Helps modulate mRNA selection, yielding the 30S pre-initiation complex (PIC). Upon addition of the 50S ribosomal subunit IF-1, IF-2 and IF-3 are released leaving the mature 70S translation initiation complex. The polypeptide is Translation initiation factor IF-1 (Agrobacterium fabrum (strain C58 / ATCC 33970) (Agrobacterium tumefaciens (strain C58))).